A 513-amino-acid polypeptide reads, in one-letter code: Cyclin-dependent kinase C-2 (513 aa).

The 300-residue stretch at 26–325 (FEKLEQIGEG…AKDALDAEYF (300 aa)) folds into the Protein kinase domain. ATP-binding positions include 32-40 (IGEGTYGQV) and K55. The residue at position 37 (Y37) is a Phosphotyrosine. D164 (proton acceptor) is an active-site residue. T198 carries the post-translational modification Phosphothreonine. A disordered region spans residues 337–513 (LPTYESSHEF…ARNQQYGWQP (177 aa)). Low complexity predominate over residues 395-404 (AGPNHPMNNN). A compositionally biased stretch (polar residues) spans 434-448 (SGNQTGGYNNQSRGG). 2 stretches are compositionally biased toward gly residues: residues 461–476 (APYGAGPRGPSGGYGV) and 483–496 (QGGGQYGGSGGSGR).

The protein belongs to the protein kinase superfamily. CMGC Ser/Thr protein kinase family. CDC2/CDKX subfamily. As to quaternary structure, interacts with CYCT1-3. Highly expressed in flowers. Expressed in seedlings, roots, rosettes and stems.

The catalysed reaction is L-seryl-[protein] + ATP = O-phospho-L-seryl-[protein] + ADP + H(+). It carries out the reaction L-threonyl-[protein] + ATP = O-phospho-L-threonyl-[protein] + ADP + H(+). It catalyses the reaction [DNA-directed RNA polymerase] + ATP = phospho-[DNA-directed RNA polymerase] + ADP + H(+). The protein is Cyclin-dependent kinase C-2 (CDKC-2) of Arabidopsis thaliana (Mouse-ear cress).